The primary structure comprises 274 residues: MQFSKMHGLGNDFMVVDAVTQNVFFSPDLIRRLADRHLGVGFDQLLVVEPPYDPELDFHYRIFNADGSEVAQCGNGARCFARFVRLKGLTNKRDIRVSTANGRMVLTVTDDDLVRVNMGEPNFEPSAVPFRANKVEKTYIMRAAEQTILCGVVSMGNPHCVIQVDDVDTAAVETLGPVLESHERFPERANIGFMQVVKREHIRLRVYERGAGETQACGSGACAAVAVGIQQGLLAEEVRVELPGGRLDIAWKGPGHPLYMTGPAVHVYDGFIHL.

Residues Asn-11, Gln-44, and Asn-64 each contribute to the substrate site. Cys-73 functions as the Proton donor in the catalytic mechanism. Residues 74–75, Asn-157, Asn-190, and 208–209 each bind substrate; these read GN and ER. Cys-217 (proton acceptor) is an active-site residue. 218–219 contacts substrate; sequence GS.

This sequence belongs to the diaminopimelate epimerase family. As to quaternary structure, homodimer.

The protein localises to the cytoplasm. It catalyses the reaction (2S,6S)-2,6-diaminopimelate = meso-2,6-diaminopimelate. It functions in the pathway amino-acid biosynthesis; L-lysine biosynthesis via DAP pathway; DL-2,6-diaminopimelate from LL-2,6-diaminopimelate: step 1/1. In terms of biological role, catalyzes the stereoinversion of LL-2,6-diaminopimelate (L,L-DAP) to meso-diaminopimelate (meso-DAP), a precursor of L-lysine and an essential component of the bacterial peptidoglycan. This chain is Diaminopimelate epimerase, found in Escherichia coli O6:H1 (strain CFT073 / ATCC 700928 / UPEC).